The sequence spans 574 residues: Streptolysin O (574 aa).

The signal sequence occupies residues 1-36 (MKDMSNKKIFKKYSRVAGLLTAALIVGNLVTANADS). A compositionally biased stretch (low complexity) spans 37–52 (NKQNTANTETTTTNEQ). Disordered regions lie at residues 37–64 (NKQN…TTEK) and 84–111 (KEMP…HTEE). Basic and acidic residues predominate over residues 53–64 (PKPESSELTTEK). A run of 4 beta stranded transmembrane segments spans residues 263 to 276 (KSQI…NSKI), 283 to 292 (IDFKSISKGE), 361 to 370 (SNDVEAAFSA), and 378 to 390 (KTNG…LENS). The Conserved undecapeptide signature appears at 532-542 (ECTGLAWEWWR). The Cholesterol binding signature appears at 564–565 (TL).

It belongs to the cholesterol-dependent cytolysin family. Homooligomeric pore complex of 35 to 50 subunits; when inserted in the host membrane.

It localises to the secreted. The protein resides in the host cell membrane. Its function is as follows. A cholesterol-dependent toxin that causes cytolysis by forming pores in cholesterol containing host membranes. After binding to target membranes, the protein undergoes a major conformation change, leading to its insertion in the host membrane and formation of an oligomeric pore complex. Cholesterol is required for binding to host membranes, membrane insertion and pore formation; cholesterol binding is mediated by a Thr-Leu pair in the C-terminus. Can be reversibly inactivated by oxidation. The chain is Streptolysin O (slo) from Streptococcus canis.